Reading from the N-terminus, the 104-residue chain is Chromogranin-A (104 aa).

A disulfide bridge links Cys-17 with Cys-38.

This sequence belongs to the chromogranin/secretogranin protein family. Dimer.

Its subcellular location is the cytoplasmic vesicle. The protein resides in the secretory vesicle. The protein localises to the secreted. Chromogranin A probably has a paracrine role in the regulation of secretion or maturation. In Struthio camelus (Common ostrich), this protein is Chromogranin-A (CHGA).